A 1100-amino-acid chain; its full sequence is Sorbin and SH3 domain-containing protein 2 (1100 aa).

Tyr13, Ser14, His27, Gly28, Ser30, and Ser43 each carry phosphoserine. A compositionally biased stretch (polar residues) spans 30–52 (SLDSTDTYPQHAQSLDGTTSSSI). Residues 30–57 (SLDSTDTYPQHAQSLDGTTSSSIPLYRS) form a disordered region. The SoHo domain occupies 66-127 (VIKAPHYPGI…YNTPYTYNAG (62 aa)). Residues 134 to 147 (SAQSHPAAKTQTYR) are compositionally biased toward polar residues. Positions 134–311 (SAQSHPAAKT…SPSRAKGGDD (178 aa)) are disordered. Alanine amide is present on His153. Residues Ser154 and Ser157 each carry the phosphoserine modification. Residues 167 to 180 (PVPPPHVPPPVPPL) are compositionally biased toward pro residues. Residues 181–217 (RPRDRSSTEKHDWDPPDRKVDTRKFRSEPRSIFEYEP) show a composition bias toward basic and acidic residues. Ser234 and Ile236 each carry phosphothreonine. A phosphoserine mark is found at Ser239, Ser245, Ser248, Lys258, Ser259, and Glu260. Phosphothreonine occurs at positions 277, 280, and 282. Ser287 carries the phosphoserine modification. A compositionally biased stretch (low complexity) spans 287-304 (SSTTLTKSFTSSSPSSPS). Position 292 is a phosphothreonine (Thr292). 10 positions are modified to phosphoserine: Phe295, Ser297, Ser298, Ser299, Ser301, Ser302, Ser304, Ala306, Asp311, and Pro316. Residues Ser320, Ser322, and Gly326 each carry the phosphothreonine modification. 3 positions are modified to phosphoserine: His341, Val344, and Arg346. Glu366 is subject to Phosphothreonine. 2 positions are modified to phosphoserine: Ser381 and Ser383. 2 positions are modified to phosphothreonine: Asp413 and Lys415. Phosphoserine is present on residues Arg437 and Arg439. Phosphothreonine is present on Ile459. Lys474, Ser494, Ser497, Ser550, and Ser750 each carry phosphoserine. Residues 807–866 (RMPRSASFQDVDTANSSCHHQDRGGALQDRESPRSYSSTLTDMGRSAPRERRGTPEKEKL) are disordered. Over residues 812 to 824 (ASFQDVDTANSSC) the composition is skewed to polar residues. Positions 825 to 839 (HHQDRGGALQDRESP) are enriched in basic and acidic residues. Position 843 is a phosphoserine (Ser843). A compositionally biased stretch (basic and acidic residues) spans 853 to 866 (APRERRGTPEKEKL). SH3 domains lie at 863–922 (KEKL…KLTP) and 938–999 (GEIG…VVKK). Phosphoserine occurs at positions 1017 and 1023. The SH3 3 domain maps to 1041 to 1100 (GGGEPFQALYNYTPRNEDELELRESDVIDVMEKCDDGWFVGTSRRTKFFGTFPGNYVKRL).

Interacts with ABL, CBL, DNM1, DNM2, FLOT1, AFDN, PTK2B/PYK2, SAPAP, SPTAN1, SYNJ1, SYNJ2, VCL/vinculin and WASF. Interacts with ABL1/c-Abl, ABL2/v-Abl/Arg, ACTN, CBL and PALLD. Interacts with PTPN12 and WASF1 via its SH3 domains; this interaction may mediate the partial PTPN12 and WASF1 translocation to focal adhesion sites. Post-translationally, ubiquitinated by CBL. In terms of processing, dephosphorylated by PTPN12. As to expression, abundantly expressed in heart. In cardiac muscle cells, located in the Z-disks of sarcomere. Also found, but to a lower extent, in small and large intestine, pancreas, thymus, colon, spleen, prostate, testis, brain, ovary and epithelial cells. In the pancreas, mainly expressed in acinar cells, duct cells and all cell types in islets (at protein level). Tends to be down-regulated in pancreatic adenocarcinomas ans metastases.

The protein resides in the cytoplasm. It is found in the perinuclear region. Its subcellular location is the apical cell membrane. The protein localises to the cell junction. It localises to the focal adhesion. The protein resides in the cell projection. It is found in the lamellipodium. Its function is as follows. Adapter protein that plays a role in the assembling of signaling complexes, being a link between ABL kinases and actin cytoskeleton. Can form complex with ABL1 and CBL, thus promoting ubiquitination and degradation of ABL1. May play a role in the regulation of pancreatic cell adhesion, possibly by acting on WASF1 phosphorylation, enhancing phosphorylation by ABL1, as well as dephosphorylation by PTPN12. Isoform 6 increases water and sodium absorption in the intestine and gall-bladder. The sequence is that of Sorbin and SH3 domain-containing protein 2 (SORBS2) from Homo sapiens (Human).